Here is a 62-residue protein sequence, read N- to C-terminus: MDMKKLIERINFLYKKSKEEVLTEEEKIEQQKLRREYIDIIKGNVKVQLEGVEKIPTPNRKN.

It belongs to the UPF0291 family.

Its subcellular location is the cytoplasm. In Clostridium botulinum (strain 657 / Type Ba4), this protein is UPF0291 protein CLJ_B2839.